A 151-amino-acid chain; its full sequence is Ribosome maturation factor RimP (151 aa).

Belongs to the RimP family.

The protein localises to the cytoplasm. Its function is as follows. Required for maturation of 30S ribosomal subunits. The protein is Ribosome maturation factor RimP of Halorhodospira halophila (strain DSM 244 / SL1) (Ectothiorhodospira halophila (strain DSM 244 / SL1)).